The following is a 451-amino-acid chain: Glyceraldehyde-3-phosphate dehydrogenase B, chloroplastic (451 aa).

The N-terminal 83 residues, 1–83 (MASHAALAPS…AAPVRGETVA (83 aa)), are a transit peptide targeting the chloroplast. Residues 94–95 (RI), D118, and R163 contribute to the NADP(+) site. Residues 237–239 (SCT), T268, R283, 296–297 (TG), and R319 each bind D-glyceraldehyde 3-phosphate. The active-site Nucleophile is C238. Position 402 (N402) interacts with NADP(+).

It belongs to the glyceraldehyde-3-phosphate dehydrogenase family. In terms of assembly, tetramer of either four A chains (GAPDH 2) or two A and two B chains (GAPDH 1).

It localises to the plastid. The protein resides in the chloroplast. The catalysed reaction is D-glyceraldehyde 3-phosphate + phosphate + NADP(+) = (2R)-3-phospho-glyceroyl phosphate + NADPH + H(+). It participates in carbohydrate biosynthesis; Calvin cycle. The protein is Glyceraldehyde-3-phosphate dehydrogenase B, chloroplastic (GAPB) of Spinacia oleracea (Spinach).